A 433-amino-acid polypeptide reads, in one-letter code: CinA-like protein (433 aa).

The protein belongs to the CinA family.

This chain is CinA-like protein, found in Frankia casuarinae (strain DSM 45818 / CECT 9043 / HFP020203 / CcI3).